Reading from the N-terminus, the 314-residue chain is WD repeat domain-containing protein 83 (314 aa).

7 WD repeats span residues 23–62, 65–104, 107–146, 151–188, 189–228, 231–272, and 275–313; these read CNQGAVRAVRFNVDGNYCMTCGSDKTLKLWNPHKGTLLKT, GHGYEVLDTAGSYDNSQMCSCSSDKTVILWDVAQGQVVRK, GHAGKVNCVQFNEEATVIMSGSIDSSIRCWDCRSRRPEAI, EAKDGISSIKISDHEILAGSVDGNLRRYDLRKGEMCAD, YLGSPITCVSFSQDSQCLLASSLDSTLRLLDKDTGELLGE, GHQN…LVLK, and VGKAAVQSLSFHPSECCLLTASEGGVQLWRGASYEEEGG.

Belongs to the WD repeat MORG1 family.

The protein resides in the cytoplasm. Functionally, molecular scaffold protein for various multimeric protein complexes. Acts as a module in the assembly of a multicomponent scaffold for the ERK pathway, linking ERK responses to specific agonists. Also involved in response to hypoxia by acting as a negative regulator of HIF1A/HIF-1-alpha. The polypeptide is WD repeat domain-containing protein 83 (wdr83) (Xenopus tropicalis (Western clawed frog)).